The primary structure comprises 431 residues: Urokinase-type plasminogen activator (431 aa).

The first 20 residues, 1 to 20, serve as a signal peptide directing secretion; the sequence is MRALLARLLLCVLVVSDSKG. Residues 27 to 63 enclose the EGF-like domain; sequence VPSNCDCLNGGTCVSNKYFSNIHWCNCPKKFGGQHCE. 6 cysteine pairs are disulfide-bonded: Cys-31–Cys-39, Cys-33–Cys-51, Cys-53–Cys-62, Cys-70–Cys-151, Cys-91–Cys-133, and Cys-122–Cys-146. A binds urokinase plasminogen activator surface receptor region spans residues 34-57; sequence LNGGTCVSNKYFSNIHWCNCPKKF. Residues 69-151 form the Kringle domain; it reads TCYEGNGHFY…LVQECMVHDC (83 aa). The segment at 152–178 is connecting peptide; sequence ADGKKPSSPPEELKFQCGQKTLRPRFK. Ser-158 is modified (phosphoserine). Intrachain disulfides connect Cys-168/Cys-299, Cys-209/Cys-225, Cys-217/Cys-288, Cys-313/Cys-382, Cys-345/Cys-361, and Cys-372/Cys-400. Residues 179-424 form the Peptidase S1 domain; that stretch reads IVGGEFTTIE…FLPWIRSHTK (246 aa). Active-site charge relay system residues include His-224 and Asp-275. Asn-322 carries N-linked (GlcNAc...) asparagine glycosylation. Position 323 is a phosphoserine (Ser-323). The active-site Charge relay system is Ser-376.

Belongs to the peptidase S1 family. As to quaternary structure, found in high and low molecular mass forms. Each consists of two chains, A and B. The high molecular mass form contains a long chain A which is cleaved to yield a short chain A. Forms heterodimer with SERPINA5. Binds LRP1B; binding is followed by internalization and degradation. Interacts with MRC2. Interacts with PLAUR. In complex with SERPINE1, interacts with PLAUR/uPAR. Interacts with SORL1 and LRP1, either alone or in complex with SERPINE1; these interactions are abolished in the presence of LRPAP1/RAP. The ternary complex composed of PLAUR-PLAU-PAI1 also interacts with SORLA. In terms of processing, phosphorylation of Ser-158 and Ser-323 abolishes proadhesive ability but does not interfere with receptor binding. Produced as an inactive single-chain protein (pro-uPA or sc-uPA), is processed into the active disulfide-linked two-chain form of PLAU/uPA by a proteolytic event mediated, at least, by TMPRSS4.

Its subcellular location is the secreted. It carries out the reaction Specific cleavage of Arg-|-Val bond in plasminogen to form plasmin.. Its activity is regulated as follows. Inhibited by SERPINA5. Inhibited by SERPINE1. Its function is as follows. Specifically cleaves the zymogen plasminogen to form the active enzyme plasmin. The protein is Urokinase-type plasminogen activator (PLAU) of Pongo abelii (Sumatran orangutan).